The sequence spans 430 residues: Chromatin assembly factor 1 p55 subunit (430 aa).

Residues serine 11 and serine 100 each carry the phosphoserine modification. WD repeat units lie at residues 126-159 (NHEGEVNRARYMPQNACVIATKTPSSDVLVFDYT), 179-210 (GHQKEGYGLSWNPNLNGYLLSASDDHTICLWD), 229-260 (GHTAVVEDVAWHLLHESLFGSVADDQKLMIWD), 275-306 (AHTAEVNCLSFNPYSEFILATGSADKTVALWD), 319-350 (SHKDEIFQVQWSPHNETILASSGTDRRLHVWD), and 376-407 (GHTAKISDFSWNPNEPWIICSVSEDNIMQVWQ).

It belongs to the WD repeat RBAP46/RBAP48/MSI1 family. As to quaternary structure, probably binds directly to helix 1 of the histone fold of histone H4, a region that is not accessible when H4 is in chromatin. Self associates. Associates with chromatin. Component of the CAF-1 complex, composed of Caf1-55, Caf1-105 and Caf1-180; within the CAF-1 complex, Caf1-180 interacts directly with both Caf1-55 and Caf1-105. Component of the NuRD complex, composed of at least Caf1-55, Mi-2, MTA1-like and HDAC1/Rpd3. Within the NuRD complex, Caf1-55 may interact directly with Mi-2, MTA1-like and HDAC1/Rpd3. The NuRD complex may also associate with the methyl-DNA binding protein MBD-like via Caf1-55 and Mi-2. Component of the NURF complex, composed of Caf1-55, E(bx), Nurf-38 and Iswi. Component of the polycomb repressive complex 2 (PRC2, also known as the Esc/E(Z) complex), composed of Caf1-55, esc, E(z), Su(z)12, and possibly pho. PRC2 associates with the accessory components Jarid2 and jing to form the PRC2 Jarid2-jing variant (PRC2.2). PRC2 may also associate with Pcl and HDAC1/Rpd3 during early embryogenesis. Interacts with Rbf and Rbf2. Component of the DREAM complex at least composed of Myb, Caf1-55, mip40, mip120, mip130, E2f2, Dp, Rbf, Rbf2, lin-52, HDAC1/Rpd3 and l(3)mbt.

It is found in the nucleus. In terms of biological role, core histone-binding subunit that may target chromatin assembly factors, chromatin remodeling factors and histone deacetylases to their histone substrates in a manner that is regulated by nucleosomal DNA. Component of several complexes which regulate chromatin metabolism. These include the chromatin assembly factor 1 (CAF-1) complex, which is required for chromatin assembly following DNA replication and DNA repair; the nucleosome remodeling and deacetylase complex (the NuRD complex), which promotes transcriptional repression by histone deacetylation and nucleosome remodeling; the nucleosome remodeling factor (NURF) complex, which catalyzes ATP-dependent nucleosome sliding and facilitates transcription of chromatin; and the polycomb group (PcG) repressor complex ESC-E(Z), which promotes repression of homeotic genes during development. Also required for transcriptional repression of E2F target genes by E2f2 and Rbf or Rbf2. This chain is Chromatin assembly factor 1 p55 subunit, found in Drosophila melanogaster (Fruit fly).